Consider the following 286-residue polypeptide: Pantothenate synthetase (286 aa).

31–38 is an ATP binding site; sequence MGALHDGH. The Proton donor role is filled by histidine 38. Position 62 (glutamine 62) interacts with (R)-pantoate. Glutamine 62 serves as a coordination point for beta-alanine. 148-151 lines the ATP pocket; sequence GKKD. Glutamine 154 provides a ligand contact to (R)-pantoate. ATP is bound by residues valine 177 and 185 to 188; that span reads KSSR.

The protein belongs to the pantothenate synthetase family. In terms of assembly, homodimer.

It localises to the cytoplasm. It carries out the reaction (R)-pantoate + beta-alanine + ATP = (R)-pantothenate + AMP + diphosphate + H(+). It participates in cofactor biosynthesis; (R)-pantothenate biosynthesis; (R)-pantothenate from (R)-pantoate and beta-alanine: step 1/1. Functionally, catalyzes the condensation of pantoate with beta-alanine in an ATP-dependent reaction via a pantoyl-adenylate intermediate. The chain is Pantothenate synthetase from Staphylococcus epidermidis (strain ATCC 35984 / DSM 28319 / BCRC 17069 / CCUG 31568 / BM 3577 / RP62A).